The primary structure comprises 259 residues: Type III pantothenate kinase (259 aa).

6 to 13 (DIGNTNIT) contributes to the ATP binding site. 113 to 116 (GADR) serves as a coordination point for substrate. The active-site Proton acceptor is the aspartate 115. Aspartate 135 serves as a coordination point for K(+). Residue threonine 138 coordinates ATP. Substrate is bound at residue threonine 190.

It belongs to the type III pantothenate kinase family. As to quaternary structure, homodimer. NH4(+) serves as cofactor. The cofactor is K(+).

The protein localises to the cytoplasm. The enzyme catalyses (R)-pantothenate + ATP = (R)-4'-phosphopantothenate + ADP + H(+). It functions in the pathway cofactor biosynthesis; coenzyme A biosynthesis; CoA from (R)-pantothenate: step 1/5. Its function is as follows. Catalyzes the phosphorylation of pantothenate (Pan), the first step in CoA biosynthesis. The sequence is that of Type III pantothenate kinase from Endomicrobium trichonymphae.